The following is a 537-amino-acid chain: 5,6-dihydroxyindole-2-carboxylic acid oxidase (537 aa).

Positions 1 to 24 (MKSYNVLPLAYISLFLMLFYQVWA) are cleaved as a signal peptide. The Lumenal, melanosome portion of the chain corresponds to 25–477 (QFPRECANIE…WPGQEFTVSE (453 aa)). Cystine bridges form between cysteine 30-cysteine 41, cysteine 42-cysteine 65, cysteine 56-cysteine 99, cysteine 101-cysteine 110, and cysteine 113-cysteine 122. N-linked (GlcNAc...) asparagine glycans are attached at residues asparagine 96 and asparagine 104. Asparagine 181 carries an N-linked (GlcNAc...) asparagine glycan. Residues histidine 192, histidine 215, and histidine 224 each contribute to the Zn(2+) site. 2 disulfide bridges follow: cysteine 258–cysteine 261 and cysteine 290–cysteine 303. N-linked (GlcNAc...) asparagine glycosylation is found at asparagine 304 and asparagine 350. Histidine 377 and histidine 381 together coordinate Zn(2+). Residue asparagine 385 is glycosylated (N-linked (GlcNAc...) asparagine). Histidine 404 is a Zn(2+) binding site. A helical transmembrane segment spans residues 478-501 (IITIAVVAALLLVAAIFGVASCLI). The Cytoplasmic segment spans residues 502–537 (RSRSTKNEANQPLLTDHYQRYAEDYEELPNPNHSMV).

Belongs to the tyrosinase family. As to quaternary structure, monomer. Interacts with ATP7A. Interacts with SLC45A2. Requires Cu(2+) as cofactor. Zn(2+) is required as a cofactor. In terms of processing, glycosylated. As to expression, pigment cells.

Its subcellular location is the melanosome membrane. It carries out the reaction 2 5,6-dihydroxyindole-2-carboxylate + O2 = 2 indole-5,6-quinone-2-carboxylate + 2 H2O. The protein operates within pigment biosynthesis; melanin biosynthesis. Plays a role in melanin biosynthesis. Catalyzes the oxidation of 5,6-dihydroxyindole-2-carboxylic acid (DHICA) into indole-5,6-quinone-2-carboxylic acid. May regulate or influence the type of melanin synthesized. Also to a lower extent, capable of hydroxylating tyrosine and producing melanin. In Mus musculus (Mouse), this protein is 5,6-dihydroxyindole-2-carboxylic acid oxidase (Tyrp1).